The sequence spans 128 residues: Putative transmembrane protein 244 (128 aa).

The next 3 helical transmembrane spans lie at 17 to 37 (FLLCVILFYTVYYVSLSMGCV), 65 to 85 (VLLVSTEVTYFVCGLFFVPVV), and 93 to 113 (AISVTILHVAITSTVMLEFPL).

Its subcellular location is the membrane. In Homo sapiens (Human), this protein is Putative transmembrane protein 244 (TMEM244).